Here is a 224-residue protein sequence, read N- to C-terminus: uncharacterized protein (224 aa).

The Matrin-type zinc finger occupies 11–42 (YYCKYCQIFVKDTPFARRSHEQTYKHQDAIKK). Residues 67 to 80 (ATATTASAVSSELA) show a composition bias toward low complexity. Disordered stretches follow at residues 67–158 (ATAT…RNRE) and 172–224 (VKPK…YDQS). The segment covering 87-98 (KEHPKLRPSKKK) has biased composition (basic residues). A compositionally biased stretch (low complexity) spans 108-122 (TSSTETDTISTTHTS). Basic and acidic residues predominate over residues 175 to 199 (KNLDKVPKLAENEGNKSLESKESNE). A compositionally biased stretch (basic residues) spans 203-216 (VFKKKKSGKLRTKS).

The protein resides in the nucleus. Its subcellular location is the nucleolus. This is an uncharacterized protein from Schizosaccharomyces pombe (strain 972 / ATCC 24843) (Fission yeast).